Reading from the N-terminus, the 201-residue chain is Peptidyl-tRNA hydrolase (201 aa).

Tyr-15 is a tRNA binding site. Residue His-20 is the Proton acceptor of the active site. TRNA is bound by residues Tyr-66, Asn-68, and Asn-114.

Belongs to the PTH family. In terms of assembly, monomer.

It localises to the cytoplasm. It catalyses the reaction an N-acyl-L-alpha-aminoacyl-tRNA + H2O = an N-acyl-L-amino acid + a tRNA + H(+). Functionally, hydrolyzes ribosome-free peptidyl-tRNAs (with 1 or more amino acids incorporated), which drop off the ribosome during protein synthesis, or as a result of ribosome stalling. In terms of biological role, catalyzes the release of premature peptidyl moieties from peptidyl-tRNA molecules trapped in stalled 50S ribosomal subunits, and thus maintains levels of free tRNAs and 50S ribosomes. The sequence is that of Peptidyl-tRNA hydrolase from Burkholderia mallei (strain NCTC 10247).